The chain runs to 645 residues: Acetyl-coenzyme A synthetase (645 aa).

CoA contacts are provided by residues 190-193 (RGGR) and T308. Residues 384–386 (GEP), 408–413 (DTWWQT), D497, and R512 contribute to the ATP site. A CoA-binding site is contributed by S520. R523 lines the ATP pocket. Positions 534, 536, and 539 each coordinate Mg(2+). The residue at position 606 (K606) is an N6-acetyllysine.

It belongs to the ATP-dependent AMP-binding enzyme family. Requires Mg(2+) as cofactor. Acetylated. Deacetylation by the SIR2-homolog deacetylase activates the enzyme.

The catalysed reaction is acetate + ATP + CoA = acetyl-CoA + AMP + diphosphate. Catalyzes the conversion of acetate into acetyl-CoA (AcCoA), an essential intermediate at the junction of anabolic and catabolic pathways. AcsA undergoes a two-step reaction. In the first half reaction, AcsA combines acetate with ATP to form acetyl-adenylate (AcAMP) intermediate. In the second half reaction, it can then transfer the acetyl group from AcAMP to the sulfhydryl group of CoA, forming the product AcCoA. This Saccharophagus degradans (strain 2-40 / ATCC 43961 / DSM 17024) protein is Acetyl-coenzyme A synthetase.